The chain runs to 231 residues: Uracil-DNA glycosylase (231 aa).

Asp70 acts as the Proton acceptor in catalysis.

It belongs to the uracil-DNA glycosylase (UDG) superfamily. UNG family.

It localises to the cytoplasm. It catalyses the reaction Hydrolyzes single-stranded DNA or mismatched double-stranded DNA and polynucleotides, releasing free uracil.. Excises uracil residues from the DNA which can arise as a result of misincorporation of dUMP residues by DNA polymerase or due to deamination of cytosine. The protein is Uracil-DNA glycosylase of Pseudomonas fluorescens (strain Pf0-1).